A 320-amino-acid chain; its full sequence is Stress-induced-phosphoprotein 1 (320 aa).

TPR repeat units follow at residues 5–38, 40–72, 80–113, 140–173, 175–207, and 208–241; these read AIAE…DPSN, TFYN…GRET, AKAM…FRDP, AQEE…DPEN, ILYS…DSKF, and IKGY…DPSN. Positions 241 to 269 are disordered; the sequence is NEEAREGVRNCLRSNDEDPEKAKERSLAD. Basic and acidic residues predominate over residues 242 to 269; it reads EEAREGVRNCLRSNDEDPEKAKERSLAD. One can recognise an STI1 domain in the interval 269-308; that stretch reads DPEVQEILRDPGMRMILEQMSNDPGAVREHLKNPEIFQKL.

As to quaternary structure, forms a complex with hsp-1/hsp70 and daf-21/hsp90. Interacts with daf-21/hsp90 (via the C-terminal MEEVD pentapeptide). In terms of tissue distribution, expressed ubiquitously in the whole body. Detected predominantly in the pharyngeal muscles, vulva epithelial cells, striated body-wall muscles, spermathecae and intestinal cell ring. Also observed in the tail regions of hermaphrodite and in the sensory rays and spicules of males.

It is found in the cytoplasm. Plays a role in gonad development. Up-regulates longevity and thermotolerance. Binds daf-21/hsp90 and inhibits its ATPase activity. The polypeptide is Stress-induced-phosphoprotein 1 (Caenorhabditis elegans).